A 98-amino-acid chain; its full sequence is NADH-ubiquinone oxidoreductase chain 4L (98 aa).

The next 3 helical transmembrane spans lie at 1–21 (MMSI…GVLI), 28–48 (STLL…ALII), and 59–79 (APLI…ALLV).

The protein belongs to the complex I subunit 4L family. In terms of assembly, core subunit of respiratory chain NADH dehydrogenase (Complex I) which is composed of 45 different subunits.

The protein resides in the mitochondrion inner membrane. It carries out the reaction a ubiquinone + NADH + 5 H(+)(in) = a ubiquinol + NAD(+) + 4 H(+)(out). Core subunit of the mitochondrial membrane respiratory chain NADH dehydrogenase (Complex I) which catalyzes electron transfer from NADH through the respiratory chain, using ubiquinone as an electron acceptor. Part of the enzyme membrane arm which is embedded in the lipid bilayer and involved in proton translocation. In Lagostrophus fasciatus (Banded hare-wallaby), this protein is NADH-ubiquinone oxidoreductase chain 4L (MT-ND4L).